An 860-amino-acid chain; its full sequence is Alanine--tRNA ligase (860 aa).

Zn(2+) contacts are provided by histidine 563, histidine 567, cysteine 665, and histidine 669.

The protein belongs to the class-II aminoacyl-tRNA synthetase family. Requires Zn(2+) as cofactor.

The protein localises to the cytoplasm. The enzyme catalyses tRNA(Ala) + L-alanine + ATP = L-alanyl-tRNA(Ala) + AMP + diphosphate. Catalyzes the attachment of alanine to tRNA(Ala) in a two-step reaction: alanine is first activated by ATP to form Ala-AMP and then transferred to the acceptor end of tRNA(Ala). Also edits incorrectly charged Ser-tRNA(Ala) and Gly-tRNA(Ala) via its editing domain. The polypeptide is Alanine--tRNA ligase (Vibrio cholerae serotype O1 (strain ATCC 39315 / El Tor Inaba N16961)).